Here is a 762-residue protein sequence, read N- to C-terminus: Anhydrosialidase (762 aa).

Positions 1-27 (MGRIGKKAMAIALVSAVMVTPLNVCAT) are cleaved as a signal peptide. Residue Arg293 participates in substrate binding. Asp318 acts as the Proton acceptor in catalysis. 3 BNR repeats span residues 328–339 (AKSTDGGNTWSE), 511–522 (RYSDDEGASWSD), and 571–582 (MYSDDHGDNWTY). Residue Glu595 is part of the active site. Residue Arg611 coordinates substrate. The BNR 4 repeat unit spans residues 620 to 631 (VTSIDGGETWSD). Arg673 is a binding site for substrate. The active-site Nucleophile is Tyr713.

This sequence belongs to the glycosyl hydrolase 33 family.

It localises to the secreted. It is found in the extracellular space. It carries out the reaction Elimination of alpha-sialyl groups in N-acetylneuraminic acid glycosides, releasing 2,7-anhydro-alpha-N-acetylneuraminate.. In Macrobdella decora (North American leech), this protein is Anhydrosialidase.